Consider the following 217-residue polypeptide: Thiamine-phosphate synthase (217 aa).

4-amino-2-methyl-5-(diphosphooxymethyl)pyrimidine contacts are provided by residues 41 to 45 (QYRDK) and asparagine 76. The Mg(2+) site is built by aspartate 77 and aspartate 96. Serine 115 is a binding site for 4-amino-2-methyl-5-(diphosphooxymethyl)pyrimidine. A 2-[(2R,5Z)-2-carboxy-4-methylthiazol-5(2H)-ylidene]ethyl phosphate-binding site is contributed by 142 to 144 (SPS). Lysine 145 lines the 4-amino-2-methyl-5-(diphosphooxymethyl)pyrimidine pocket. 2-[(2R,5Z)-2-carboxy-4-methylthiazol-5(2H)-ylidene]ethyl phosphate is bound by residues glycine 172 and 192–193 (IS).

This sequence belongs to the thiamine-phosphate synthase family. The cofactor is Mg(2+).

The catalysed reaction is 2-[(2R,5Z)-2-carboxy-4-methylthiazol-5(2H)-ylidene]ethyl phosphate + 4-amino-2-methyl-5-(diphosphooxymethyl)pyrimidine + 2 H(+) = thiamine phosphate + CO2 + diphosphate. It catalyses the reaction 2-(2-carboxy-4-methylthiazol-5-yl)ethyl phosphate + 4-amino-2-methyl-5-(diphosphooxymethyl)pyrimidine + 2 H(+) = thiamine phosphate + CO2 + diphosphate. The enzyme catalyses 4-methyl-5-(2-phosphooxyethyl)-thiazole + 4-amino-2-methyl-5-(diphosphooxymethyl)pyrimidine + H(+) = thiamine phosphate + diphosphate. It participates in cofactor biosynthesis; thiamine diphosphate biosynthesis; thiamine phosphate from 4-amino-2-methyl-5-diphosphomethylpyrimidine and 4-methyl-5-(2-phosphoethyl)-thiazole: step 1/1. In terms of biological role, condenses 4-methyl-5-(beta-hydroxyethyl)thiazole monophosphate (THZ-P) and 2-methyl-4-amino-5-hydroxymethyl pyrimidine pyrophosphate (HMP-PP) to form thiamine monophosphate (TMP). The sequence is that of Thiamine-phosphate synthase from Acidithiobacillus ferrooxidans (strain ATCC 23270 / DSM 14882 / CIP 104768 / NCIMB 8455) (Ferrobacillus ferrooxidans (strain ATCC 23270)).